Consider the following 442-residue polypeptide: 6-phospho-alpha-glucosidase 1 (442 aa).

6 to 72 (FSVLIAGGGS…PEVEFLATTD (67 aa)) is a binding site for NAD(+). Substrate is bound by residues R95 and N149. C171 is a Mn(2+) binding site. D172 serves as the catalytic Proton donor. H202 contributes to the Mn(2+) binding site. Catalysis depends on Y265, which acts as the Proton acceptor. R285 is a binding site for substrate.

This sequence belongs to the glycosyl hydrolase 4 family. In terms of assembly, homodimer. May also form homotetramer. Mn(2+) serves as cofactor. Requires Co(2+) as cofactor. It depends on Ni(2+) as a cofactor. Fe(2+) is required as a cofactor. The cofactor is Mg(2+). NAD(+) serves as cofactor.

The enzyme catalyses alpha-maltose 6'-phosphate + H2O = D-glucose 6-phosphate + D-glucose. Its activity is regulated as follows. Is inhibited by EDTA in vitro. Its function is as follows. Is probably involved in the catabolism of alpha-glycosides accumulated via a phosphoenolpyruvate-dependent phosphotransferase system (PEP-PTS). Hydrolyzes a wide variety of 6-phospho-alpha-D-glucosides including the five isomeric derivatives of sucrose, i.e. trehalulose-6'-phosphate, turanose-6'-phosphate, maltulose-6'-phosphate, leucrose-6'-phosphate, and palatinose-6'-phosphate, but is not active on sucrose-6-phosphate. Can also hydrolyze maltose-6'-phosphate and methyl-alpha-glucose-6-phosphate, and poorly, trehalose-6-phosphate. Fails to hydrolyze beta-O-linked phosphorylated disaccharides such as cellobiose-6'-phosphate and gentiobiose-6'-phosphate. Does not seem to be involved in maltose catabolism. The sequence is that of 6-phospho-alpha-glucosidase 1 (simA) from Lacticaseibacillus paracasei (strain ATCC 334 / BCRC 17002 / CCUG 31169 / CIP 107868 / KCTC 3260 / NRRL B-441) (Lactobacillus paracasei).